Reading from the N-terminus, the 108-residue chain is Ferredoxin, plant-type (108 aa).

A 2Fe-2S ferredoxin-type domain is found at 5–96 (FEITVQPGGE…DLCIERYSKP (92 aa)). Positions 40, 45, 48, and 80 each coordinate [2Fe-2S] cluster.

This sequence belongs to the 2Fe2S plant-type ferredoxin family.

Its pathway is aromatic compound metabolism; catechol degradation. Functionally, ferredoxins are iron-sulfur proteins that transfer electrons in a wide variety of metabolic reactions. This Pseudomonas putida (Arthrobacter siderocapsulatus) protein is Ferredoxin, plant-type (nahT).